A 390-amino-acid polypeptide reads, in one-letter code: Methionyl-tRNA formyltransferase, mitochondrial (390 aa).

The transit peptide at methionine 1–serine 33 directs the protein to the mitochondrion.

This sequence belongs to the Fmt family.

It localises to the mitochondrion. It catalyses the reaction L-methionyl-tRNA(fMet) + (6R)-10-formyltetrahydrofolate = N-formyl-L-methionyl-tRNA(fMet) + (6S)-5,6,7,8-tetrahydrofolate + H(+). Methionyl-tRNA formyltransferase that formylates methionyl-tRNA in mitochondria and is crucial for translation initiation. The protein is Methionyl-tRNA formyltransferase, mitochondrial (MTFMT) of Bos taurus (Bovine).